The chain runs to 186 residues: METFSSKDLALQAQKKILSRMASKSMVNMFIDETSSEILDELYRVSKEYTKNKSESQKVIKNLIKIAVKIGVLFRHNRFSPEELVLAQDFKSKLHNGAMTAISFYEVEFTFEKDVLPDILMECKNLLLRLVEKHLTPKSHGRIQHVFNHFADPEMLCQLYDPKGSLWPHLQKICHGLNKLIDEGKL.

Belongs to the TNFAIP8 family. TNFAIP8L2 subfamily.

In terms of biological role, acts as a negative regulator of innate and adaptive immunity by maintaining immune homeostasis. Negative regulator of Toll-like receptor and T-cell receptor function. Prevents hyperresponsiveness of the immune system and maintains immune homeostasis. Inhibits jun/ap1 and NF-kappa-B activation. Promotes Fas-induced apoptosis. This chain is Tumor necrosis factor alpha-induced protein 8-like protein 2 (tnfaip8l2), found in Xenopus tropicalis (Western clawed frog).